The chain runs to 1183 residues: DNA-directed RNA polymerase subunit beta (1183 aa).

Residues 1151–1162 (EIEMADVDDEDA) are compositionally biased toward acidic residues. Residues 1151 to 1183 (EIEMADVDDEDAAERKVDLQQKSAPESQKETTD) form a disordered region.

The protein belongs to the RNA polymerase beta chain family. In terms of assembly, the RNAP catalytic core consists of 2 alpha, 1 beta, 1 beta' and 1 omega subunit. When a sigma factor is associated with the core the holoenzyme is formed, which can initiate transcription.

The enzyme catalyses RNA(n) + a ribonucleoside 5'-triphosphate = RNA(n+1) + diphosphate. DNA-dependent RNA polymerase catalyzes the transcription of DNA into RNA using the four ribonucleoside triphosphates as substrates. In Staphylococcus epidermidis (strain ATCC 12228 / FDA PCI 1200), this protein is DNA-directed RNA polymerase subunit beta.